The primary structure comprises 64 residues: Conotoxin Im11.4 (64 aa).

The signal sequence occupies residues 1 to 26; that stretch reads MMFRLTSVSCILLVIAFLNLVGLTNA. 4 disulfides stabilise this stretch: Cys27-Cys41, Cys34-Cys46, Cys40-Cys50, and Cys45-Cys54. Position 57 is a histidine amide (His57). The propeptide occupies 61–64; the sequence is ATFQ.

Belongs to the conotoxin I2 superfamily. Expressed by the venom duct.

The protein localises to the secreted. In Conus imperialis (Imperial cone), this protein is Conotoxin Im11.4.